A 149-amino-acid polypeptide reads, in one-letter code: Ribonuclease H (149 aa).

Positions 1–143 constitute an RNase H type-1 domain; that stretch reads MNAVEIYTDG…ADMLANRGVE (143 aa). Residues Asp-9, Glu-47, Asp-69, and Asp-135 each coordinate Mg(2+).

This sequence belongs to the RNase H family. As to quaternary structure, monomer. It depends on Mg(2+) as a cofactor.

It localises to the cytoplasm. It catalyses the reaction Endonucleolytic cleavage to 5'-phosphomonoester.. Functionally, endonuclease that specifically degrades the RNA of RNA-DNA hybrids. The sequence is that of Ribonuclease H from Albidiferax ferrireducens (strain ATCC BAA-621 / DSM 15236 / T118) (Rhodoferax ferrireducens).